We begin with the raw amino-acid sequence, 352 residues long: MPECWDGEHDIETPYGLLHVVIRGSPKGNRPAILTYHDVGLNHKLCFNTFFNFEDMQEITKHFVVCHVDAPGQQVGASQFPQGYQFPSMEQLAAMLPSVVQHFGFKYVIGIGVGAGAYVLAKFALIFPDLVEGLVLMNIDPNGKGWIDWAATKLSGLTSTLPDTVLSHLFSQEELVNNTELVQSYRQQISNVVNQANLQLFWNMYNSRRDLDINRPGTVPNAKTLRCPVMLVVGDNAPAEEGVVECNSKLDPTTTTFLKMADSGGLPQVTQPGKLTEAFKYFLQGMGYIAHLKDRRLSGGAVPSASMTRLARSRTASLTSASSVDGSRPQPCAHSDSSEGMGQVNHTMEVSC.

Phosphoserine occurs at positions 293, 298, 317, and 323. A disordered region spans residues 301-352 (AVPSASMTRLARSRTASLTSASSVDGSRPQPCAHSDSSEGMGQVNHTMEVSC). The span at 308 to 323 (TRLARSRTASLTSASS) shows a compositional bias: low complexity. The span at 338–352 (SEGMGQVNHTMEVSC) shows a compositional bias: polar residues.

The protein belongs to the NDRG family. Predominantly expressed in the brain (at protein level). Detected in neurons of various parts of brain, including the olfactory bulb, olfactory tuberculum, cerebral cortex, striatum, hippocampus, dentate gyrus, thalamus, hypothalamus, mesencephalon, cerebellum, pons and medulla oblongata.

It localises to the cytoplasm. It is found in the cytosol. Its function is as follows. Contributes to the maintenance of intracerebral BDNF levels within the normal range, which is necessary for the preservation of spatial learning and the resistance to neuronal cell death caused by ischemic stress. May enhance growth factor-induced ERK1 and ERK2 phosphorylation. May attenuate NGF-promoted ELK1 phosphorylation in a microtubule-dependent manner. In Mus musculus (Mouse), this protein is Protein NDRG4 (Ndrg4).